Consider the following 384-residue polypeptide: 4-hydroxy-3-methylbut-2-en-1-yl diphosphate synthase (flavodoxin) 1 (384 aa).

Cys281, Cys284, Cys316, and Glu323 together coordinate [4Fe-4S] cluster.

Belongs to the IspG family. It depends on [4Fe-4S] cluster as a cofactor.

It carries out the reaction (2E)-4-hydroxy-3-methylbut-2-enyl diphosphate + oxidized [flavodoxin] + H2O + 2 H(+) = 2-C-methyl-D-erythritol 2,4-cyclic diphosphate + reduced [flavodoxin]. The protein operates within isoprenoid biosynthesis; isopentenyl diphosphate biosynthesis via DXP pathway; isopentenyl diphosphate from 1-deoxy-D-xylulose 5-phosphate: step 5/6. Its function is as follows. Converts 2C-methyl-D-erythritol 2,4-cyclodiphosphate (ME-2,4cPP) into 1-hydroxy-2-methyl-2-(E)-butenyl 4-diphosphate. The sequence is that of 4-hydroxy-3-methylbut-2-en-1-yl diphosphate synthase (flavodoxin) 1 from Streptomyces coelicolor (strain ATCC BAA-471 / A3(2) / M145).